The sequence spans 342 residues: UDP-3-O-acylglucosamine N-acyltransferase (342 aa).

The active-site Proton acceptor is the H243.

Belongs to the transferase hexapeptide repeat family. LpxD subfamily. In terms of assembly, homotrimer.

It carries out the reaction a UDP-3-O-[(3R)-3-hydroxyacyl]-alpha-D-glucosamine + a (3R)-hydroxyacyl-[ACP] = a UDP-2-N,3-O-bis[(3R)-3-hydroxyacyl]-alpha-D-glucosamine + holo-[ACP] + H(+). Its pathway is bacterial outer membrane biogenesis; LPS lipid A biosynthesis. In terms of biological role, catalyzes the N-acylation of UDP-3-O-acylglucosamine using 3-hydroxyacyl-ACP as the acyl donor. Is involved in the biosynthesis of lipid A, a phosphorylated glycolipid that anchors the lipopolysaccharide to the outer membrane of the cell. The chain is UDP-3-O-acylglucosamine N-acyltransferase from Coxiella burnetii (strain CbuK_Q154) (Coxiella burnetii (strain Q154)).